The following is a 376-amino-acid chain: E3 ubiquitin-protein ligase RNF133 (376 aa).

Residues 65–167 form the PA domain; it reads SSTLKRVAGV…LKGTEIFHLI (103 aa). The helical transmembrane segment at 190-210 threads the bilayer; that stretch reads YLVSFVIVTTATLAYFIFYHI. The RING-type; atypical zinc-finger motif lies at 256-297; the sequence is CVICFEHYKPNDIVRILTCKHFFHKNCIDPWILSHGTCPICK. The disordered stretch occupies residues 328–376; sequence TLSPSEEETNNEVSPAGTSDKVIHVEENPTSQNNDSQPHSVVEDVHPSP. Over residues 355–366 the composition is skewed to polar residues; the sequence is NPTSQNNDSQPH.

As to quaternary structure, interacts with E3 ligase UBE2J1. In terms of processing, auto-ubiquitinated.

The protein localises to the endoplasmic reticulum membrane. It carries out the reaction S-ubiquitinyl-[E2 ubiquitin-conjugating enzyme]-L-cysteine + [acceptor protein]-L-lysine = [E2 ubiquitin-conjugating enzyme]-L-cysteine + N(6)-ubiquitinyl-[acceptor protein]-L-lysine.. Its pathway is protein modification; protein ubiquitination. Functionally, has E3 ubiquitin-protein ligase activity. Plays a role in male fecundity through the interaction with the E2 ubituitin-protein ligase UBE2J1. In Macaca fascicularis (Crab-eating macaque), this protein is E3 ubiquitin-protein ligase RNF133 (RNF133).